The primary structure comprises 660 residues: Bifunctional polymyxin resistance protein ArnA (660 aa).

The tract at residues 1–304 (MKTVVFAYHD…TLGLVQGSRL (304 aa)) is formyltransferase ArnAFT. 86-88 (HLI) serves as a coordination point for (6R)-10-formyltetrahydrofolate. H104 serves as the catalytic Proton donor; for formyltransferase activity. Residues R114 and 136–140 (VKRAD) contribute to the (6R)-10-formyltetrahydrofolate site. Residues 314–660 (RRTRVLILGV…RTVDLTDKPS (347 aa)) are dehydrogenase ArnADH. NAD(+) is bound by residues D347 and 368 to 369 (DI). Residues A393, Y398, and 432-433 (TS) each bind UDP-alpha-D-glucuronate. E434 serves as the catalytic Proton acceptor; for decarboxylase activity. Residues R460, N492, 526 to 535 (KLIDGGKQKR), and Y613 contribute to the UDP-alpha-D-glucuronate site. Residue R619 is the Proton donor; for decarboxylase activity of the active site.

It in the N-terminal section; belongs to the Fmt family. UDP-L-Ara4N formyltransferase subfamily. In the C-terminal section; belongs to the NAD(P)-dependent epimerase/dehydratase family. UDP-glucuronic acid decarboxylase subfamily. In terms of assembly, homohexamer, formed by a dimer of trimers.

The catalysed reaction is UDP-alpha-D-glucuronate + NAD(+) = UDP-beta-L-threo-pentopyranos-4-ulose + CO2 + NADH. The enzyme catalyses UDP-4-amino-4-deoxy-beta-L-arabinose + (6R)-10-formyltetrahydrofolate = UDP-4-deoxy-4-formamido-beta-L-arabinose + (6S)-5,6,7,8-tetrahydrofolate + H(+). Its pathway is nucleotide-sugar biosynthesis; UDP-4-deoxy-4-formamido-beta-L-arabinose biosynthesis; UDP-4-deoxy-4-formamido-beta-L-arabinose from UDP-alpha-D-glucuronate: step 1/3. It participates in nucleotide-sugar biosynthesis; UDP-4-deoxy-4-formamido-beta-L-arabinose biosynthesis; UDP-4-deoxy-4-formamido-beta-L-arabinose from UDP-alpha-D-glucuronate: step 3/3. It functions in the pathway bacterial outer membrane biogenesis; lipopolysaccharide biosynthesis. Functionally, bifunctional enzyme that catalyzes the oxidative decarboxylation of UDP-glucuronic acid (UDP-GlcUA) to UDP-4-keto-arabinose (UDP-Ara4O) and the addition of a formyl group to UDP-4-amino-4-deoxy-L-arabinose (UDP-L-Ara4N) to form UDP-L-4-formamido-arabinose (UDP-L-Ara4FN). The modified arabinose is attached to lipid A and is required for resistance to polymyxin and cationic antimicrobial peptides. This chain is Bifunctional polymyxin resistance protein ArnA, found in Escherichia coli O81 (strain ED1a).